Consider the following 89-residue polypeptide: Putative defensin-like protein 230 (89 aa).

The first 26 residues, 1 to 26 (MRSVIWFIVSYTLMLLVLRGGKEVEA), serve as a signal peptide directing secretion. Disulfide bonds link Cys30–Cys84, Cys40–Cys65, Cys48–Cys78, and Cys63–Cys80.

The protein belongs to the DEFL family.

It localises to the secreted. This chain is Putative defensin-like protein 230 (SCRL24), found in Arabidopsis thaliana (Mouse-ear cress).